We begin with the raw amino-acid sequence, 364 residues long: DNA replication and repair protein RecF (364 aa).

30-37 provides a ligand contact to ATP; that stretch reads GNNGQGKT.

The protein belongs to the RecF family.

The protein resides in the cytoplasm. Its function is as follows. The RecF protein is involved in DNA metabolism; it is required for DNA replication and normal SOS inducibility. RecF binds preferentially to single-stranded, linear DNA. It also seems to bind ATP. The chain is DNA replication and repair protein RecF from Geotalea daltonii (strain DSM 22248 / JCM 15807 / FRC-32) (Geobacter daltonii).